The chain runs to 400 residues: Large envelope protein (400 aa).

The residue at position 1 (methionine 1) is an N-acetylmethionine. Disordered stretches follow at residues 1–42 (MGGY…NNPD) and 84–118 (ILTT…SHPQ). Residue glycine 2 is the site of N-myristoyl glycine; by host attachment. The interval 2 to 119 (GGYSSKPRKG…PPLRDSHPQA (118 aa)) is pre-S1. A pre-S region spans residues 2-174 (GGYSSKPRKG…FSRTGDPVPK (173 aa)). Residues 2 to 181 (GGYSSKPRKG…VPKMENTTSG (180 aa)) are Virion surface; in external conformation-facing. Residues 2–253 (GGYSSKPRKG…PGYRWMCLRR (252 aa)) are Intravirion; in internal conformation-facing. N-linked (GlcNAc...) asparagine glycosylation is present at tyrosine 4. The tract at residues 120 to 174 (MQWNSTTFHQALLDPRVRGLYFPAGGSSSGTANPVPTTASPISSIFSRTGDPVPK) is pre-S2. The helical transmembrane segment at 182 to 202 (FLGPLLVLQAGFFLLTRILTI) threads the bilayer. Over 203 to 253 (PQSLDSWWTSLNFLGGAPACPGQNSQSPTSNHSPTSCPPICPGYRWMCLRR) the chain is Intravirion; in external conformation. A helical transmembrane segment spans residues 254 to 274 (FIIFLFILLLCLIFLLVLLDY). Over 275-348 (QGMLPVCPLI…WASVRFSWLS (74 aa)) the chain is Virion surface. N-linked (GlcNAc...) asparagine; by host glycosylation occurs at asparagine 320. The chain crosses the membrane as a helical span at residues 349-369 (LLAPFVQWFVGLSPTVWLSVI). Topologically, residues 370 to 375 (WMMWYW) are intravirion. Residues 376 to 398 (GPSLYNILSPFLPLLPIFFCLWV) form a helical membrane-spanning segment. The Virion surface portion of the chain corresponds to 399-400 (YI).

Belongs to the orthohepadnavirus major surface antigen family. As to quaternary structure, in its internal form (Li-HBsAg), interacts with the capsid protein and with the isoform S. Interacts with host chaperone CANX. In terms of assembly, associates with host chaperone CANX through its pre-S2 N glycan; this association may be essential for isoform M proper secretion. Interacts with isoform L. Interacts with the antigens of satellite virus HDV (HDVAgs); this interaction is required for encapsidation of HDV genomic RNA. In terms of processing, isoform M is N-terminally acetylated by host at a ratio of 90%, and N-glycosylated by host at the pre-S2 region. Myristoylated.

The protein localises to the virion membrane. Its function is as follows. The large envelope protein exists in two topological conformations, one which is termed 'external' or Le-HBsAg and the other 'internal' or Li-HBsAg. In its external conformation the protein attaches the virus to cell receptors and thereby initiating infection. This interaction determines the species specificity and liver tropism. This attachment induces virion internalization predominantly through caveolin-mediated endocytosis. The large envelope protein also assures fusion between virion membrane and endosomal membrane. In its internal conformation the protein plays a role in virion morphogenesis and mediates the contact with the nucleocapsid like a matrix protein. Functionally, the middle envelope protein plays an important role in the budding of the virion. It is involved in the induction of budding in a nucleocapsid independent way. In this process the majority of envelope proteins bud to form subviral lipoprotein particles of 22 nm of diameter that do not contain a nucleocapsid. The sequence is that of Large envelope protein from Homo sapiens (Human).